A 103-amino-acid chain; its full sequence is Putative septation protein SpoVG (103 aa).

The protein belongs to the SpoVG family.

In terms of biological role, could be involved in septation. The protein is Putative septation protein SpoVG of Exiguobacterium sibiricum (strain DSM 17290 / CCUG 55495 / CIP 109462 / JCM 13490 / 255-15).